Here is a 630-residue protein sequence, read N- to C-terminus: Chaperone protein HtpG (630 aa).

The interval 1 to 339 (MSHTETHAFQ…SNDLPLNVSR (339 aa)) is a; substrate-binding. The tract at residues 340–556 (EILQSNRVVD…EGDISAHMAR (217 aa)) is b. Positions 557–630 (MMEQMGQAMP…RMNALLSEVI (74 aa)) are c.

The protein belongs to the heat shock protein 90 family. Homodimer.

Its subcellular location is the cytoplasm. In terms of biological role, molecular chaperone. Has ATPase activity. The protein is Chaperone protein HtpG of Hydrogenovibrio crunogenus (strain DSM 25203 / XCL-2) (Thiomicrospira crunogena).